Here is a 282-residue protein sequence, read N- to C-terminus: ATP synthase gamma chain (282 aa).

This sequence belongs to the ATPase gamma chain family. In terms of assembly, F-type ATPases have 2 components, CF(1) - the catalytic core - and CF(0) - the membrane proton channel. CF(1) has five subunits: alpha(3), beta(3), gamma(1), delta(1), epsilon(1). CF(0) has three main subunits: a, b and c.

Its subcellular location is the cell membrane. Its function is as follows. Produces ATP from ADP in the presence of a proton gradient across the membrane. The gamma chain is believed to be important in regulating ATPase activity and the flow of protons through the CF(0) complex. This chain is ATP synthase gamma chain, found in Clostridium botulinum (strain Loch Maree / Type A3).